The primary structure comprises 162 residues: NAD(P)H-quinone oxidoreductase subunit N (162 aa).

It belongs to the complex I NdhN subunit family. As to quaternary structure, NDH-1 can be composed of about 15 different subunits; different subcomplexes with different compositions have been identified which probably have different functions.

It localises to the cellular thylakoid membrane. It catalyses the reaction a plastoquinone + NADH + (n+1) H(+)(in) = a plastoquinol + NAD(+) + n H(+)(out). The enzyme catalyses a plastoquinone + NADPH + (n+1) H(+)(in) = a plastoquinol + NADP(+) + n H(+)(out). NDH-1 shuttles electrons from an unknown electron donor, via FMN and iron-sulfur (Fe-S) centers, to quinones in the respiratory and/or the photosynthetic chain. The immediate electron acceptor for the enzyme in this species is believed to be plastoquinone. Couples the redox reaction to proton translocation, and thus conserves the redox energy in a proton gradient. Cyanobacterial NDH-1 also plays a role in inorganic carbon-concentration. The chain is NAD(P)H-quinone oxidoreductase subunit N from Nostoc sp. (strain PCC 7120 / SAG 25.82 / UTEX 2576).